Reading from the N-terminus, the 259-residue chain is UPF0246 protein RD1_0358 (259 aa).

Belongs to the UPF0246 family.

This chain is UPF0246 protein RD1_0358, found in Roseobacter denitrificans (strain ATCC 33942 / OCh 114) (Erythrobacter sp. (strain OCh 114)).